The chain runs to 235 residues: 2-C-methyl-D-erythritol 4-phosphate cytidylyltransferase (235 aa).

This sequence belongs to the IspD/TarI cytidylyltransferase family. IspD subfamily.

The enzyme catalyses 2-C-methyl-D-erythritol 4-phosphate + CTP + H(+) = 4-CDP-2-C-methyl-D-erythritol + diphosphate. It participates in isoprenoid biosynthesis; isopentenyl diphosphate biosynthesis via DXP pathway; isopentenyl diphosphate from 1-deoxy-D-xylulose 5-phosphate: step 2/6. Catalyzes the formation of 4-diphosphocytidyl-2-C-methyl-D-erythritol from CTP and 2-C-methyl-D-erythritol 4-phosphate (MEP). This is 2-C-methyl-D-erythritol 4-phosphate cytidylyltransferase from Pseudomonas fluorescens (strain Pf0-1).